The sequence spans 206 residues: 2,3-bisphosphoglycerate-dependent phosphoglycerate mutase (206 aa).

Substrate-binding positions include 9 to 16 (RHGQSEWN), 22 to 23 (TG), Arg-61, 88 to 91 (ERDY), Lys-99, 115 to 116 (RR), and 159 to 160 (GN). Catalysis depends on His-10, which acts as the Tele-phosphohistidine intermediate. The Proton donor/acceptor role is filled by Glu-88.

The protein belongs to the phosphoglycerate mutase family. BPG-dependent PGAM subfamily. As to quaternary structure, homodimer.

It catalyses the reaction (2R)-2-phosphoglycerate = (2R)-3-phosphoglycerate. Its pathway is carbohydrate degradation; glycolysis; pyruvate from D-glyceraldehyde 3-phosphate: step 3/5. In terms of biological role, catalyzes the interconversion of 2-phosphoglycerate and 3-phosphoglycerate. This is 2,3-bisphosphoglycerate-dependent phosphoglycerate mutase from Bartonella quintana (strain Toulouse) (Rochalimaea quintana).